The primary structure comprises 1180 residues: Chitin synthase 6 (1180 aa).

2 consecutive transmembrane segments (helical) span residues 108–128 (FTIC…IIAF) and 374–394 (LLLA…IAAL). N737 carries an N-linked (GlcNAc...) asparagine glycan. 3 consecutive transmembrane segments (helical) span residues 762 to 782 (FIVF…VYLV), 795 to 815 (IPYI…ILFL), and 822 to 842 (YIGW…FLPI). The DEK-C domain maps to 1118 to 1175 (DPTDEEIKSAVQTYLANQPSLMNVTKRSVREALVAAFPNAELSYKKSMINKAIDDTLS).

The protein belongs to the chitin synthase family. Class V subfamily.

The protein localises to the cell membrane. It localises to the cytoplasmic vesicle membrane. It carries out the reaction [(1-&gt;4)-N-acetyl-beta-D-glucosaminyl](n) + UDP-N-acetyl-alpha-D-glucosamine = [(1-&gt;4)-N-acetyl-beta-D-glucosaminyl](n+1) + UDP + H(+). In terms of biological role, polymerizes chitin, a structural polymer of the cell wall and septum, by transferring the sugar moiety of UDP-GlcNAc to the non-reducing end of the growing chitin polymer. Plays a crucial role during infection and allows the fungus to overcome the resistance of the plant that checks growth of the pathogen and eventually eliminates it. This Mycosarcoma maydis (Corn smut fungus) protein is Chitin synthase 6.